The chain runs to 396 residues: Phosphoglycerate kinase (396 aa).

Residues 19–21 (DFN), Arg35, 58–61 (HLGR), Arg117, and Arg150 each bind substrate. ATP-binding positions include Lys201, Glu323, and 349 to 352 (GGDT).

Belongs to the phosphoglycerate kinase family. As to quaternary structure, monomer.

The protein localises to the cytoplasm. It carries out the reaction (2R)-3-phosphoglycerate + ATP = (2R)-3-phospho-glyceroyl phosphate + ADP. Its pathway is carbohydrate degradation; glycolysis; pyruvate from D-glyceraldehyde 3-phosphate: step 2/5. This chain is Phosphoglycerate kinase, found in Desulfosudis oleivorans (strain DSM 6200 / JCM 39069 / Hxd3) (Desulfococcus oleovorans).